Here is a 515-residue protein sequence, read N- to C-terminus: Ribose import ATP-binding protein RbsA 1 (515 aa).

2 consecutive ABC transporter domains span residues Phe8–Glu244 and Val256–His503. Residue Gly40 to Ser47 participates in ATP binding.

It belongs to the ABC transporter superfamily. Ribose importer (TC 3.A.1.2.1) family. As to quaternary structure, the complex is composed of an ATP-binding protein (RbsA), two transmembrane proteins (RbsC) and a solute-binding protein (RbsB).

It localises to the cell inner membrane. It carries out the reaction D-ribose(out) + ATP + H2O = D-ribose(in) + ADP + phosphate + H(+). Part of the ABC transporter complex RbsABC involved in ribose import. Responsible for energy coupling to the transport system. The protein is Ribose import ATP-binding protein RbsA 1 of Mesorhizobium japonicum (strain LMG 29417 / CECT 9101 / MAFF 303099) (Mesorhizobium loti (strain MAFF 303099)).